A 58-amino-acid polypeptide reads, in one-letter code: MSDGMKDKAKAIGKKIKGEAKDQWGSATDDPQRKAEGKRDKAKGEAQDTIADAKNNNK.

Composition is skewed to basic and acidic residues over residues 1-22 (MSDG…EAKD) and 30-46 (DPQR…KGEA). The disordered stretch occupies residues 1-58 (MSDGMKDKAKAIGKKIKGEAKDQWGSATDDPQRKAEGKRDKAKGEAQDTIADAKNNNK).

It belongs to the UPF0337 (CsbD) family.

This chain is UPF0337 protein OB2685, found in Oceanobacillus iheyensis (strain DSM 14371 / CIP 107618 / JCM 11309 / KCTC 3954 / HTE831).